A 240-amino-acid chain; its full sequence is Gas vesicle protein C (240 aa).

Residues 1-13 (MALKDKWQQDRIG) are compositionally biased toward basic and acidic residues. Positions 1-20 (MALKDKWQQDRIGRQQGVQE) are disordered. Repeats lie at residues 18 to 50 (VQERQQQVQTTLSLWQQERQNQALDDQESRQGF), 51 to 83 (VTGVQQQTQELLTNISTERLWVAQQQREQLENF), 84 to 116 (IQQLSQEVGEFLQQTIEERSQVAAQLHQQLSEF), 117 to 149 (REDLEYRVTDLLANYQKQRLEARETLLEDLAIF), and 150 to 207 (RQTL…LQDY). Residues 18–207 (VQERQQQVQT…GVFRAELQDY (190 aa)) are 5 X 33 AA tandem repeats.

This sequence belongs to the gas vesicle GvpC family.

It is found in the gas vesicle. Its function is as follows. Confers stability, involved in shaping gas vesicles, hollow, gas filled proteinaceous nanostructures. During planktonic growth they allow positioning of the organism at a favorable depth for light or nutrient acquisition. This chain is Gas vesicle protein C, found in Planktothrix agardhii (Oscillatoria agardhii).